The chain runs to 274 residues: MTLQEEIIRQLGVKASIDPKEEIRKTVDFLKAYLRKHSFLKTYVLGISGGQDSTLAGKLAQMAIAELREETGDQAYQFIAVRLPYGVQADEADAQKALAFIAPDQTLTINIKAAVDGQVEALQAAGVEISDFNKGNIKARQRMISQYAIAGQMAGAVIGTDHAAENITGFFTKFGDGGADILPLFRLNKRQGKALLKVLGADAALYEKVPTADLEDQKPGLADEVALGVTYQDIDDYLEGKLISKVAQATIEKWWHKGQHKRHLPITIFDDFWK.

46-53 provides a ligand contact to ATP; sequence GISGGQDS. Residue Asp-52 participates in Mg(2+) binding. Arg-140 is a binding site for deamido-NAD(+). Residue Thr-160 coordinates ATP. Glu-165 lines the Mg(2+) pocket. 2 residues coordinate deamido-NAD(+): Lys-173 and Asp-180. ATP contacts are provided by Lys-189 and Thr-211. 260–261 is a binding site for deamido-NAD(+); sequence HK.

This sequence belongs to the NAD synthetase family. In terms of assembly, homodimer.

It carries out the reaction deamido-NAD(+) + NH4(+) + ATP = AMP + diphosphate + NAD(+) + H(+). It functions in the pathway cofactor biosynthesis; NAD(+) biosynthesis; NAD(+) from deamido-NAD(+) (ammonia route): step 1/1. Catalyzes the ATP-dependent amidation of deamido-NAD to form NAD. Uses ammonia as a nitrogen source. The sequence is that of NH(3)-dependent NAD(+) synthetase from Streptococcus pyogenes serotype M6 (strain ATCC BAA-946 / MGAS10394).